Here is a 929-residue protein sequence, read N- to C-terminus: LPS-assembly protein LptD (929 aa).

The signal sequence occupies residues M1 to A33. Positions N58 to G101 are disordered. Positions T66–E90 are enriched in low complexity.

The protein belongs to the LptD family. As to quaternary structure, component of the lipopolysaccharide transport and assembly complex. Interacts with LptE and LptA.

The protein resides in the cell outer membrane. Together with LptE, is involved in the assembly of lipopolysaccharide (LPS) at the surface of the outer membrane. This Pseudomonas aeruginosa (strain LESB58) protein is LPS-assembly protein LptD.